The sequence spans 1264 residues: MPEKRLTAEPPTITEEEFEDSLATDDFLVDYFNEFLSLPTFSEAIRFNADYGVFEVANDAPQFLEKQLKKILQNQQPRNPIYDVVRKGKNEVKPVQMNAPDEDETINVNYNIMCLSREEGIKWIKKERLPAFLESDCYFEYRLAKLVSQVRWSKSGMNFTVGSNFSPWIVKKPPSLPPPATEEDNLVIMKKFYVSLGEASYTQTKDWFALAKQSQQTVSTFSLPCCVPYNKLKSPAISSVSENFIFDDGVHPRTKKDPSKTNKLISEFEEEEGEEEEVSVSLQDTPSQALLRVYLEKKQDVDESLTMHFSTCEEFLSSYIYFILRGAIQQIVGKPVGETPDYINFNNITKVSFDDCFESIHGKNFLSELVQTTKERSEEIEQTSLSSKNESAGPESRADWCISHRTYDIGNRKEFERFKKFIKGTLGERYWWLWMDIERLKVLKDPGRHQRHLEKMKKCYLVSNGDYYLSAEILSKFKLLDGSQWNEEHLRNIQSEVLKPLLLYWAPRFCVTHSASTKYASAELKFWHLRQAKPRKDIDPFPQMATLLPLRPKSCIPQIPEIQKEEFSLSQPPKSPNKSPEVKTATQKPWKRELLYPGSSKDDVIEKGSKYMSESSKVIHLTSFTDISECLKPQLDRRYAYTEEPRVKTVSDVGALGGSDMENLLQSLYVENRAGFFFTKFCEHSGNKLWKNSVYFWFDLQAYHQLFYQETLQPFKVCKQAQYLFATYVAPSATLDIGLQQEKKKEIYMKIQPPFEDLFDTAEEYILLLLLEPWTKMVKSDQIAYKKVELVEETRQLDSTYFRKLQALHKETFSKKAEDTTCEIGTGILSLSNVSKRTEYWDNVPAEYKHFKFSDLLNNKLEFEHFRQFLETHSSSMDLMCWTDIEQFRRITYRDRNQRKAKSIYIKNKYLNKKYFFGPNSPASLYQQNQVMHLSGGWGKILHEQLDAPVLVEIQKHVQNRLENVWLPLFLASEQFAARQKIKVQMKDIAEELLLQKAEKKIGVWKPVESKWISSSCKIIAFRKALLNPVTSRQFQRFVALKGDLLENGLLFWQEVQKYKDLCHSHCDESVIQKKITTIINCFINSSIPPALQIDIPVEQAQKIIEHRKELGPYVFREAQMTIFGVLFKFWPQFCEFRKNLTDENIMSVLERRQEYNKQKKKLAVLEDEKSGKDGIKQYANTSVPAIKTALLSDSFLGLQPYGRQPTWCYSKYIEALEQERILLKIQEELEKKLFAGLQPLTNFKASSSTMSLKKNMSAHSSQK.

The disordered stretch occupies residues 565 to 587 (EEFSLSQPPKSPNKSPEVKTATQ). Positions 568–578 (SLSQPPKSPNK) are enriched in polar residues. RGS domains are found at residues 852-980 (KFSD…AARQ) and 1021-1145 (AFRK…TDEN). Residues 1142–1174 (TDENIMSVLERRQEYNKQKKKLAVLEDEKSGKD) are a coiled coil.

As to quaternary structure, interacts with GNA11, GNA12 and GNA13. Testis-specific. Expressed in Leydig cells and spermatogenic cells from the spermatogonia to spermatid stages (at protein level).

Its subcellular location is the cytoplasm. It is found in the nucleus. In terms of biological role, inhibits signal transduction by increasing the GTPase activity of G protein alpha subunits thereby driving them into their inactive GDP-bound form. In Homo sapiens (Human), this protein is Regulator of G-protein signaling 22 (RGS22).